Here is a 338-residue protein sequence, read N- to C-terminus: Secretory carrier-associated membrane protein 1 (338 aa).

The interval 1 to 64 (MSDFDSNPFA…NVPNTQPAIM (64 aa)) is disordered. Ser2 bears the N-acetylserine mark. The residue at position 2 (Ser2) is a Phosphoserine. Topologically, residues 2–155 (SDFDSNPFAD…QKTVKLMYYL (154 aa)) are cytoplasmic. Thr45 carries the post-translational modification Phosphothreonine. A helical membrane pass occupies residues 156–176 (WMFHAVTLFLNIFGCLAWFCV). At 177–181 (DSARA) the chain is on the lumenal side. The helical transmembrane segment at 182–202 (VDFGLSILWFLLFTPCSFVCW) threads the bilayer. Residues 203–218 (YRPLYGAFRSDSSFRF) are Cytoplasmic-facing. A helical transmembrane segment spans residues 219–239 (FVFFFVYICQFAVHVLQAAGF). Residues 240–261 (HNWGNCGWISSLTGLNQNIPVG) lie on the Lumenal side of the membrane. A helical transmembrane segment spans residues 262-282 (IMMIIIAALFTASAVISLVMF). At 283–338 (KKVHGLYRTTGASFEKAQQEFATGVMSNKTVQTAAANAASTAASSAAQNAFKGNQI) the chain is on the cytoplasmic side.

It belongs to the SCAMP family. In terms of assembly, interacts with SYNRG and ITSN1. Interacts with SLC9A7. Widely expressed, with highest expression in brain.

It is found in the golgi apparatus. The protein resides in the trans-Golgi network membrane. It localises to the recycling endosome membrane. In terms of biological role, functions in post-Golgi recycling pathways. Acts as a recycling carrier to the cell surface. The sequence is that of Secretory carrier-associated membrane protein 1 (SCAMP1) from Homo sapiens (Human).